Here is a 165-residue protein sequence, read N- to C-terminus: MKSVITTVVGAADSASRFPSASDMESVQGSIQRAAARLEAAEKLSANYDAIAQRAVDAVYAQYPNGATGRQPRQCATEGKEKCKRDFVHYLRLINYCLVTGGTGPLDELAINGQKEVYKALSIDAGTYVAGFSNMRNDGCSPRDMSAQALTAYNTLLDYVINSLG.

C75 provides a ligand contact to phycourobilin. (2R,3E)-phycoerythrobilin-binding residues include C83 and C140.

It belongs to the phycobiliprotein family. As to quaternary structure, heterodimer of an alpha and a beta chain. Post-translationally, contains two covalently linked phycoerythrobilin chromophores and one covalently linked phycourobilin chromophore.

It localises to the cellular thylakoid membrane. Light-harvesting photosynthetic bile pigment-protein from the phycobiliprotein complex. The protein is C-phycoerythrin class 2 subunit alpha (mpeA) of Synechococcus sp. (strain WH8020).